The primary structure comprises 491 residues: bZIP transcription factor hapX (491 aa).

The disordered stretch occupies residues alanine 19–arginine 73. The 41-residue stretch at aspartate 55–glutamate 95 folds into the bZIP domain. Residues lysine 60–arginine 79 form a basic motif region. The interval leucine 83–isoleucine 90 is leucine-zipper. Residues serine 149–lysine 161 are compositionally biased toward basic and acidic residues. Disordered regions lie at residues serine 149 to valine 196, glutamate 224 to proline 245, and valine 397 to proline 416. A compositionally biased stretch (low complexity) spans valine 397–serine 413.

This sequence belongs to the bZIP family. YAP subfamily.

It is found in the nucleus. Transcription factor required for repression of genes during iron starvation. Represses iron-dependent and mitochondrial-localized activities including respiration, TCA cycle, amino acid metabolism, iron-sulfur-cluster and heme biosynthesis. Iron starvation causes a massive remodeling of the amino acid pool and hapX is essential for the coordination of the production of siderophores and their precursor ornithine. The chain is bZIP transcription factor hapX from Aspergillus fumigatus (strain ATCC MYA-4609 / CBS 101355 / FGSC A1100 / Af293) (Neosartorya fumigata).